A 217-amino-acid chain; its full sequence is 7-cyano-7-deazaguanine synthase (217 aa).

An ATP-binding site is contributed by 10 to 20 (FSGGQDSTTCL). Zn(2+) contacts are provided by Cys185, Cys194, Cys197, and Cys200.

Belongs to the QueC family. In terms of assembly, homodimer. Zn(2+) is required as a cofactor.

The enzyme catalyses 7-carboxy-7-deazaguanine + NH4(+) + ATP = 7-cyano-7-deazaguanine + ADP + phosphate + H2O + H(+). It participates in purine metabolism; 7-cyano-7-deazaguanine biosynthesis. Its function is as follows. Catalyzes the ATP-dependent conversion of 7-carboxy-7-deazaguanine (CDG) to 7-cyano-7-deazaguanine (preQ(0)). The sequence is that of 7-cyano-7-deazaguanine synthase from Streptococcus thermophilus (strain ATCC BAA-491 / LMD-9).